Reading from the N-terminus, the 339-residue chain is Heat-inducible transcription repressor HrcA (339 aa).

The protein belongs to the HrcA family.

Its function is as follows. Negative regulator of class I heat shock genes (grpE-dnaK-dnaJ and groELS operons). Prevents heat-shock induction of these operons. This Leifsonia xyli subsp. xyli (strain CTCB07) protein is Heat-inducible transcription repressor HrcA.